We begin with the raw amino-acid sequence, 409 residues long: Phosphoserine phosphatase SerB2 (409 aa).

2 consecutive ACT domains span residues 8–86 and 102–174; these read LITV…RSDD and GRPI…DYGL. Residue Asp185 is the Nucleophile of the active site. Positions 185 and 187 each coordinate Mg(2+). Asp187 functions as the Proton donor in the catalytic mechanism. Substrate contacts are provided by residues Glu194, Arg230, 273 to 274, and Lys318; that span reads SG. Mg(2+) is bound at residue Asp341. Asn344 lines the substrate pocket.

The protein belongs to the HAD-like hydrolase superfamily. SerB family. In terms of assembly, homodimer. The dimeric population shifts to a tetramer in the presence of L-serine, which inactivates the enzyme. The cofactor is Mg(2+). It depends on Mn(2+) as a cofactor.

The protein resides in the secreted. It localises to the host cytoplasm. The protein localises to the host cytosol. It catalyses the reaction O-phospho-L-serine + H2O = L-serine + phosphate. The catalysed reaction is O-phospho-D-serine + H2O = D-serine + phosphate. The enzyme catalyses O-phospho-L-seryl-[protein] + H2O = L-seryl-[protein] + phosphate. It carries out the reaction O-phospho-L-threonyl-[protein] + H2O = L-threonyl-[protein] + phosphate. The protein operates within amino-acid biosynthesis; L-serine biosynthesis; L-serine from 3-phospho-D-glycerate: step 3/3. With respect to regulation, clofazimine, a drug being evaluated for XDR and MDR tuberculosis, inhibits SerB2 phosphatase activity and reverses the various functional effects described above and interactions with host proteins. Is inhibited by known PSP inhibitors such as chlorpromazine, DL-AP3 and sodium orthovanadate, but not by okadaic acid. By binding to the ACT domains, amino-acids have various effects on enzyme activity: L-serine and L-glycine act as inhibitors, whereas L-lysine, L-tyrosine and L-phenylalanine are activators. High throughput screen has been performed to identify specific PSP inhibitors with activity against intracellular bacteria; the two best hits identified in this screen, clorobiocin and rosaniline, are bactericidal and kill bacteria in infected macrophages in a dose-dependent manner. Its function is as follows. Catalyzes the dephosphorylation of O-phospho-L-serine into L-serine, a step in the L-serine biosynthetic pathway. Exhibits high specificity for L-phosphoserine compared to substrates like L-phosphothreonine (5% relative activity) and L-phosphotyrosine (1.7% relative activity). In the host, induces significant cytoskeleton rearrangements through cofilin dephosphorylation and its subsequent activation, and affects the expression of genes that regulate actin dynamics. It specifically interacts with HSP90, HSP70 and HSP27 that block apoptotic pathways but not with other HSPs. Also interacts with GAPDH. It actively dephosphorylates MAP kinase p38 and NF-kappa B p65 (specifically at Ser-536) that play crucial roles in inflammatory and immune responses. This in turn leads to down-regulation of Interleukin 8, a chemotactic and inflammatory cytokine. Thus might help the pathogen to evade the host's immune response. Exogenous addition of purified SerB2 protein to human THP-1 cells (that can be differentiated into macrophage-like cells) induces microtubule rearrangements; the phosphatase activity is co-related to the elicited rearrangements, while addition of the ACT-domains alone elicits no rearrangements. This Mycobacterium tuberculosis (strain ATCC 25618 / H37Rv) protein is Phosphoserine phosphatase SerB2.